A 223-amino-acid polypeptide reads, in one-letter code: Coiled-coil domain-containing protein 70 (223 aa).

Positions 129 to 153 form a coiled coil; the sequence is NALWERDRNLLQEDKALWEEEKALW. A disordered region spans residues 199–223; it reads EQRHQNGPYNANEEPQSTSFPRGRA. The segment covering 203 to 223 has biased composition (polar residues); sequence QNGPYNANEEPQSTSFPRGRA.

This chain is Coiled-coil domain-containing protein 70, found in Mus musculus (Mouse).